Here is a 209-residue protein sequence, read N- to C-terminus: Uracil phosphoribosyltransferase (209 aa).

5-phospho-alpha-D-ribose 1-diphosphate-binding positions include Arg-79, Arg-104, and 131–139 (DPMLATGNS). Uracil contacts are provided by residues Ile-194 and 199–201 (GDA). A 5-phospho-alpha-D-ribose 1-diphosphate-binding site is contributed by Asp-200.

This sequence belongs to the UPRTase family. Mg(2+) is required as a cofactor.

It carries out the reaction UMP + diphosphate = 5-phospho-alpha-D-ribose 1-diphosphate + uracil. Its pathway is pyrimidine metabolism; UMP biosynthesis via salvage pathway; UMP from uracil: step 1/1. Its activity is regulated as follows. Allosterically activated by GTP. Catalyzes the conversion of uracil and 5-phospho-alpha-D-ribose 1-diphosphate (PRPP) to UMP and diphosphate. This chain is Uracil phosphoribosyltransferase, found in Rhizobium etli (strain CIAT 652).